The following is a 729-amino-acid chain: Serine/threonine-protein kinase TBK1 (729 aa).

One can recognise a Protein kinase domain in the interval 9–310; sequence WLLSDILGQG…ETSDILHRMV (302 aa). Residue 15 to 23 participates in ATP binding; that stretch reads LGQGATANV. Residue Lys-30 forms a Glycyl lysine isopeptide (Lys-Gly) (interchain with G-Cter in ubiquitin) linkage. Residue Lys-38 participates in ATP binding. The Proton acceptor role is filled by Asp-135. Residue Ser-172 is modified to Phosphoserine; by autocatalysis and IKKB. A Ubiquitin-like domain is found at 309–385; sequence MVIHVFSLQQ…ENPIFVVSRE (77 aa). Residue Lys-401 forms a Glycyl lysine isopeptide (Lys-Gly) (interchain with G-Cter in ubiquitin) linkage. Coiled-coil stretches lie at residues 407-657 and 658-713; these read DLDG…LQET and LPQK…ILER. An N6-methyllysine; by SETD4 modification is found at Lys-607. Residues 621–729 are interaction with AZI2, TANK and TBKBP1; sequence RKMLHLRKQL…DGGLRNVDCL (109 aa). Residue Lys-670 forms a Glycyl lysine isopeptide (Lys-Gly) (interchain with G-Cter in ubiquitin) linkage. Ser-716 carries the post-translational modification Phosphoserine.

Belongs to the protein kinase superfamily. Ser/Thr protein kinase family. I-kappa-B kinase subfamily. In terms of assembly, homodimer. Interacts with DDX3X, TIRAP and TRAF2. Part of a ternary complex consisting of TANK, TRAF2 and TBK1. Interacts with AZI2, TANK and TBKBP1; these interactions are mutually exclusive and mediate TBK1 activation. Interacts with GSK3B; this interaction promotes TBK1 self-association and autophosphorylation. Interacts with SIKE1; SIKE1 is associated with TBK1 under physiological condition and dissociated from TBK1 upon viral infection or TLR3 stimulation. Interacts with IRF3, leading to IRF3 phosphorylation. Interacts with RIGI. Interacts with CYLD. Interacts with OPTN and TRAF3. Interacts with SRC. Interacts with the exocyst complex subunit SEC5/EXOC2; this interaction is sufficient to trigger TBK1 activity. Interacts with STING1, leading to STING1 phosphorylation. Interacts with IFIT3 (via N-terminus). Interacts with MAVS; interaction only takes place in the presence of IFIT3 and leads to MAVS phosphorylation. Interacts (via protein kinase domain) with TTLL12 (via TTL domain); the interaction prevents MAVS binding to TBK1. Interacts with TICAM1; this interaction is enhanced in the presence of WDFY1 and leads to TICAM1 phosphorylation. Interacts with TRIM26. Interacts with TRIM23. Interacts with TTC4 and IKBKE. Interacts with HNRNPA2B1. Interacts with DDX3X. Interacts with TRIM14. Interacts with CEP170; efficient complex formation may be dependent on the presence of CCDC61. Interacts with TRAF3IP3. Interacts with HSP90AA1; the interaction mediates TBK1 association with TOMM70. Interacts with TAX1BP1. Interacts with kinase IKBKB; the complex interacts with STAT1, leading to phosphorylation of STAT1 on 'Thr-749' by IKBKB. Interacts with ICOS; this interaction is critical for the maturation of T follicular regulatory cells. Interacts with RNF144B; this interaction prevents TBK1 phosphorylation and subsequent activation. Interacts with ASB8; this interaction promotes TBK1 proteasomal degradation. Forms a ternary complex with ZNF268 and SETD4; the interaction with SETD4 is ZNF268-dependent and leads to TBK1 monomethylation, which enhances its interaction with IRF3 and MAVS. (Microbial infection) Interacts with Borna disease virus (BDV) P protein leading to its phosphorylation. As to quaternary structure, (Microbial infection) Interacts with Ebola virus protein VP35. In terms of assembly, (Microbial infection) Interacts with HCV NS3; this interaction leads to inhibition of cellular antiviral response by blocking necessary interactions between the TBK1 and its substrates IRF3 and IRF7. (Microbial infection) Interacts with human herpesvirus 1 protein ICP34.5. As to quaternary structure, (Microbial infection) Interacts with Zika virus non-structural protein 1/NS1 and non-structural protein 4B/NS4B. In terms of assembly, (Microbial infection) Interacts with SARS-CoV-2 non-structural protein 6; this interaction decreases IRF3 phosphorylation by 57%, which leads to reduced IFN-beta (IFNB) production. Interacts with SARS-CoV-2 helicase; this interaction inhibits TBK1 phosphorylation and decreases IRF3 phosphorylation by 75%, which leads to reduced IFN-beta production. Interacts with SARS-CoV-2 M protein; the interaction promotes TBK1 degradation via 'Lys-48'-linked ubiquitination. (Microbial infection) Interacts with human cytomegalovirus protein UL35; this interaction inhibits type I interferon production. As to quaternary structure, (Microbial infection) Interacts with heartland virus NSs; this interaction antagonizes TBK1 phosphorylation and inhibits TBK1-IRF3 interaction and thus the establishment of an antiviral state. In terms of assembly, (Microbial infection) Interacts (via N-terminus) with Severe fever with thrombocytopenia virus (SFTSV) NSs; this interaction antagonizes TBK1 phosphorylation and sequesters TBK1 in NSs-induced cytoplasmic inclusion bodies thereby inhibiting the IFN responses. Post-translationally, autophosphorylation at Ser-172 activates the kinase, and is an essential step for virus-triggered signaling. Phosphorylated by IKBKB/IKKB at Ser-172. Phosphorylation requires homodimerization and ubiquitination at Lys-30 and Lys-401. Dephosphorylated at Ser-172 by PPM1B and this negatively regulates its role in mediating antiviral response. In terms of processing, 'Lys-63'-linked polyubiquitination by MIB1 after RNA virus infection, or by NRDP1 after LPS stimulation at Lys-30 and Lys-401, participates in kinase activation. 'Lys-48'-linked polyubiquitination at Lys-670 by DTX4 leads to proteasomal degradation. 'Lys-48'-linked polyubiquitination by TRAIP also leads to proteasomal degradation. 'Lys-48'-linked polyubiquitination by TRAF7; leading to proteasomal degradation. 'Lys-63'-linked polyubiquitination by RNF128 at Lys-30 and Lys-401 leads to the activation of antiviral responses. 'Lys-48'-linked polyubiquitination after 'lys-33'-linked deubiquitination by USP38 promotes TBK1 degradation. (Microbial infection) Interaction with SARS-CoV-2 M protein induces 'Lys-48'-linked ubiquitination which leads to proteasomal degradation. Post-translationally, (Microbial infection) Deubiquitinated by Epstein-Barr virus BPLF1 on both 'Lys-48' and 'Lys-63'-linked ubiquitin chains; leading to inhibition of type I interfewron production. In terms of processing, monomethylation at Lys-607 by SETD4 maximizes TBK1 activation and promotes efficient interferon signaling. As to expression, ubiquitous with higher expression in testis. Expressed in the ganglion cells, nerve fiber layer and microvasculature of the retina.

It localises to the cytoplasm. It catalyses the reaction L-seryl-[protein] + ATP = O-phospho-L-seryl-[protein] + ADP + H(+). The catalysed reaction is L-threonyl-[protein] + ATP = O-phospho-L-threonyl-[protein] + ADP + H(+). In terms of biological role, serine/threonine kinase that plays an essential role in regulating inflammatory responses to foreign agents. Following activation of toll-like receptors by viral or bacterial components, associates with TRAF3 and TANK and phosphorylates interferon regulatory factors (IRFs) IRF3 and IRF7 as well as DDX3X. This activity allows subsequent homodimerization and nuclear translocation of the IRFs leading to transcriptional activation of pro-inflammatory and antiviral genes including IFNA and IFNB. In order to establish such an antiviral state, TBK1 form several different complexes whose composition depends on the type of cell and cellular stimuli. Plays a key role in IRF3 activation: acts by first phosphorylating innate adapter proteins MAVS, STING1 and TICAM1 on their pLxIS motif, leading to recruitment of IRF3, thereby licensing IRF3 for phosphorylation by TBK1. Phosphorylated IRF3 dissociates from the adapter proteins, dimerizes, and then enters the nucleus to induce expression of interferons. Thus, several scaffolding molecules including FADD, TRADD, MAVS, AZI2, TANK or TBKBP1/SINTBAD can be recruited to the TBK1-containing-complexes. Under particular conditions, functions as a NF-kappa-B effector by phosphorylating NF-kappa-B inhibitor alpha/NFKBIA, IKBKB or RELA to translocate NF-Kappa-B to the nucleus. Restricts bacterial proliferation by phosphorylating the autophagy receptor OPTN/Optineurin on 'Ser-177', thus enhancing LC3 binding affinity and antibacterial autophagy. Phosphorylates SMCR8 component of the C9orf72-SMCR8 complex, promoting autophagosome maturation. Phosphorylates ATG8 proteins MAP1LC3C and GABARAPL2, thereby preventing their delipidation and premature removal from nascent autophagosomes. Seems to play a role in energy balance regulation by sustaining a state of chronic, low-grade inflammation in obesity, which leads to a negative impact on insulin sensitivity. Attenuates retroviral budding by phosphorylating the endosomal sorting complex required for transport-I (ESCRT-I) subunit VPS37C. Phosphorylates Borna disease virus (BDV) P protein. Plays an essential role in the TLR3- and IFN-dependent control of herpes virus HSV-1 and HSV-2 infections in the central nervous system. Acts both as a positive and negative regulator of the mTORC1 complex, depending on the context: activates mTORC1 in response to growth factors by catalyzing phosphorylation of MTOR, while it limits the mTORC1 complex by promoting phosphorylation of RPTOR. Acts as a positive regulator of the mTORC2 complex by mediating phosphorylation of MTOR, leading to increased phosphorylation and activation of AKT1. Phosphorylates and activates AKT1. Involved in the regulation of TNF-induced RIPK1-mediated cell death, probably acting via CYLD phosphorylation that in turn controls RIPK1 ubiquitination status. Also participates in the differentiation of T follicular regulatory cells together with the receptor ICOS. The chain is Serine/threonine-protein kinase TBK1 from Homo sapiens (Human).